Consider the following 673-residue polypeptide: Armadillo repeat-containing protein 8 (673 aa).

Residue Ala2 is modified to N-acetylalanine. ARM repeat units follow at residues 51–92, 95–134, 138–176, 178–217, 224–265, 269–309, 313–352, 374–413, 416–455, 458–497, 501–540, 543–585, 588–627, and 634–673; these read NKQK…SLAM, ENNV…TIFT, TPEE…HCCK, PDHQ…VLAF, MTLV…YMCR, IRTD…YLIE, ELQR…HDLK, DIRK…SLSR, QQLR…NLLL, SPSK…NTAF, QKIK…NLLS, PHID…NIAD, TAKD…NLIW, and QERQ…QYLA. The residue at position 337 (Ser337) is a Phosphoserine. The residue at position 512 (Ser512) is a Phosphoserine.

As to quaternary structure, identified in the CTLH complex that contains GID4, RANBP9 and/or RANBP10, MKLN1, MAEA, RMND5A (or alternatively its paralog RMND5B), GID8, ARMC8, WDR26 and YPEL5. Within this complex, MAEA, RMND5A (or alternatively its paralog RMND5B), GID8, WDR26, and RANBP9 and/or RANBP10 form the catalytic core, while GID4, MKLN1, ARMC8 and YPEL5 have ancillary roles.

Its subcellular location is the nucleus. It is found in the cytoplasm. Functionally, component of the CTLH E3 ubiquitin-protein ligase complex that selectively accepts ubiquitin from UBE2H and mediates ubiquitination and subsequent proteasomal degradation of the transcription factor HBP1. The protein is Armadillo repeat-containing protein 8 (ARMC8) of Pongo abelii (Sumatran orangutan).